Reading from the N-terminus, the 413-residue chain is Zinc finger protein 821 (413 aa).

A disordered region spans residues 26–83; the sequence is RQAMMKTDFPGDLGSQRQAIQQLRDQDSSSSDSEGDEEETTQDEVSSHTSEEDGGVVK. Residues 58–67 are compositionally biased toward acidic residues; sequence SEGDEEETTQ. C2H2-type zinc fingers lie at residues 117–141 and 151–173; these read QLCQ…VYQH and YMCP…LLIH. Residues 260–367 are a coiled coil; sequence ALRRQNEPLE…EKMDMMLRAQ (108 aa). The tract at residues 279–320 is disordered; that stretch reads RTAKKSRRDNETPEEREVRRMRDREAKRLQRMQETDEQRARR.

The protein belongs to the krueppel C2H2-type zinc-finger protein family.

It is found in the nucleus. Functionally, may be involved in transcriptional regulation. In Mus musculus (Mouse), this protein is Zinc finger protein 821 (Znf821).